The following is a 51-amino-acid chain: Small integral membrane protein 38 (51 aa).

The helical transmembrane segment at 13–33 threads the bilayer; it reads PLLALLVVILLARLILWSCLG.

The protein localises to the membrane. This is Small integral membrane protein 38 from Homo sapiens (Human).